We begin with the raw amino-acid sequence, 499 residues long: Zinc finger protein PLAG1 (499 aa).

The tract at residues 1–33 is disordered; that stretch reads MATVIPGDLSEVRDTQKAPSGKRKRGESKPRKN. Residues 2–84 are interaction with KPNA2; sequence ATVIPGDLSE…SKYKLQRHMA (83 aa). Positions 22–25 match the Nuclear localization signal motif; the sequence is KRKR. 7 C2H2-type zinc fingers span residues 34–56, 62–86, 92–114, 121–143, 150–172, 185–207, and 213–236; these read FPCQLCDKAFNSVEKLKVHSFSH, YKCTHQDCTKAFVSKYKLQRHMATH, HKCNYCEKMFHRKDHLKNHLHTH, FKCEECGKSYNTKLGFKRHLALH, LTCKVCLQNFESTGVLLEHLKSH, HQCEHCERRFYTRKDVRRHMVVH, and FLCQYCAQRFGRKDHLTRHMKKSH. The interval 41 to 242 is decreased nuclear import with localization in the nucleus but also in the cytoplasm; it reads KAFNSVEKLK…KKSHNQELLK (202 aa). The interval 243 to 383 is repression domain; contains 3 sumoylation motifs and massively decrease transcription activity; the sequence is VKTEPVDFLD…SPASSSKLGL (141 aa). Residues 243-499 are activates transcription; Inhibition of nuclear import due to lack of NLS and KPNA2 interaction; it reads VKTEPVDFLD…TLPRFHQAFQ (257 aa). Residues Lys244 and Lys263 each participate in a glycyl lysine isopeptide (Lys-Gly) (interchain with G-Cter in SUMO) cross-link. A compositionally biased stretch (low complexity) spans 365–379; sequence GGAPSSSQDSPASSS. A disordered region spans residues 365-400; sequence GGAPSSSQDSPASSSKLGLEPQSGSPDDGAGDLSLS. The tract at residues 384-499 is massively activates transcription; sequence EPQSGSPDDG…TLPRFHQAFQ (116 aa).

It belongs to the krueppel C2H2-type zinc-finger protein family. Interacts with KPNA2, which escorts protein to the nucleus via interaction with nuclear localization signal. Interacts with E3 SUMO-protein ligase PIAS1, PIAS2 and PIAS4. Post-translationally, sumoylated with SUMO1; which inhibits transcriptional activity, but does not affect nuclear localization. Blockers of sumoylation pathway such as SENP3 and inactive UBE2I increases transcriptional capacity. Sumoylation is increased in the presence of PIAS1. Acetylated by lysine acetyltransferase EP300; which activates transcriptional capacity. Lysine residues that are sumoylated also seem to be target for acetylation. Expressed in heart, spleen, lung, kidney, brain, testis and epididymis but not in salivary glands.

It localises to the nucleus. Its function is as follows. Transcription factor whose activation results in up-regulation of target genes, such as IGFII, leading to uncontrolled cell proliferation: when overexpressed in cultured cells, higher proliferation rate and transformation are observed. Other target genes such as CRLF1, CRABP2, CRIP2, PIGF are strongly induced in cells with PLAG1 induction. Proto-oncogene whose ectopic expression can trigger the development of pleomorphic adenomas of the salivary gland and lipoblastomas. Cooperates with CBFB-MYH11. In Mus musculus (Mouse), this protein is Zinc finger protein PLAG1 (Plag1).